The primary structure comprises 501 residues: MKFSIADKSIKQTKDILLILGIFYKDCYQKTLKYISDENKKNIIQVVKNIKIKDNIGSTYFISNTNKVGSNPILLIMLGSKVNINSRIYKKLIINTISSIKNIKYKKSIFFLLNLNFNNSNLYWKIRRSIEYIYESLYEFNNFKSKTKSYKIYMKEIMFYIHDENEIKQANIAISHSVSISKGIIITKNLGNMPSNFCDPHYLSHQSYILKDKYSEKISVEIMDHKKIKNIGMNAYLHVSKGSSKNPYLSIIKYNENKFNGKSPIILIGKGLTFDSGGISIKPSNNMDEMKFDMCGAAAVLGVMHAISELNLNLYVIGILACCENMVDSSSYKPGDIIKTLSGKTVEVINTDAEGRLVLCDVITYVKRFNPRIVIDIATLTGACVIALGHHYTGLISNCDELSENILNASNITEDLAWRLPLNKKFSKQLKSRFADISNISDRSGSAITAGCFLYEFAKEYKWAHLDIAGTAWKSGVYKQATGRPVSLLTQLLINYGDKKI.

Mn(2+) is bound by residues Lys270 and Asp275. Residue Lys282 is part of the active site. Residues Asp293, Asp352, and Glu354 each coordinate Mn(2+). Arg356 is a catalytic residue.

This sequence belongs to the peptidase M17 family. Mn(2+) serves as cofactor.

The protein localises to the cytoplasm. The enzyme catalyses Release of an N-terminal amino acid, Xaa-|-Yaa-, in which Xaa is preferably Leu, but may be other amino acids including Pro although not Arg or Lys, and Yaa may be Pro. Amino acid amides and methyl esters are also readily hydrolyzed, but rates on arylamides are exceedingly low.. The catalysed reaction is Release of an N-terminal amino acid, preferentially leucine, but not glutamic or aspartic acids.. Functionally, presumably involved in the processing and regular turnover of intracellular proteins. Catalyzes the removal of unsubstituted N-terminal amino acids from various peptides. The chain is Probable cytosol aminopeptidase from Wigglesworthia glossinidia brevipalpis.